The primary structure comprises 217 residues: MAISTLTLTQSLYTRSFRPTIFFSSSSSSSFSCLCSSSSDCEPKLSVKKRVFGVGLGFLASSILSLTPLDADATRIDYYATVGDPLCEYSYAKSGLGFCDLDVGFGDEAPRGVLVNIHYTARFADGTLFDSSYKRARPLTMRIGVGKVIRGLDQGILGGEGVPPMRVGGKRKLQIPPKLAYGPEPAGCFSGDCNIPGNATLLYDINFVEIYPGSNTR.

The N-terminal 34 residues, 1–34 (MAISTLTLTQSLYTRSFRPTIFFSSSSSSSFSCL), are a transit peptide targeting the chloroplast. Intrachain disulfides connect C87/C99 and C188/C193. One can recognise a PPIase FKBP-type domain in the interval 112–211 (GVLVNIHYTA…LYDINFVEIY (100 aa)).

Belongs to the FKBP-type PPIase family. In terms of assembly, part of the chloroplast NDH complex, composed of a mixture of chloroplast and nucleus encoded subunits. Component of the NDH lumenal subcomplex, at least composed of PnsL1, PnsL2, PnsL3, PnsL4 and PnsL5.

It is found in the plastid. Its subcellular location is the chloroplast thylakoid lumen. The catalysed reaction is [protein]-peptidylproline (omega=180) = [protein]-peptidylproline (omega=0). In terms of biological role, NDH shuttles electrons from NAD(P)H:plastoquinone, via FMN and iron-sulfur (Fe-S) centers, to quinones in the photosynthetic chain and possibly in a chloroplast respiratory chain. The immediate electron acceptor for the enzyme in this species is believed to be plastoquinone. Couples the redox reaction to proton translocation, and thus conserves the redox energy in a proton gradient. PPIases accelerate the folding of proteins. It catalyzes the cis-trans isomerization of proline imidic peptide bonds in oligopeptides. Seems to be essential for stabilizing the NDH subcomplex A. The chain is Photosynthetic NDH subunit of lumenal location 4, chloroplastic from Arabidopsis thaliana (Mouse-ear cress).